We begin with the raw amino-acid sequence, 276 residues long: Energy-coupling factor transporter ATP-binding protein EcfA1 (276 aa).

Residues 2–237 (IEIKNLKFKY…GSELVDLGLD (236 aa)) form the ABC transporter domain. 37–44 (GHNGSGKS) contacts ATP.

The protein belongs to the ABC transporter superfamily. Energy-coupling factor EcfA family. Forms a stable energy-coupling factor (ECF) transporter complex composed of 2 membrane-embedded substrate-binding proteins (S component), 2 ATP-binding proteins (A component) and 2 transmembrane proteins (T component).

It is found in the cell membrane. ATP-binding (A) component of a common energy-coupling factor (ECF) ABC-transporter complex. Unlike classic ABC transporters this ECF transporter provides the energy necessary to transport a number of different substrates. The chain is Energy-coupling factor transporter ATP-binding protein EcfA1 from Streptococcus thermophilus (strain CNRZ 1066).